The following is a 269-amino-acid chain: Protein IAL1 (269 aa).

The 102-residue stretch at 32–133 (SPCAACKFLR…QDLARAKYEL (102 aa)) folds into the LOB domain.

Belongs to the LOB domain-containing protein family. Expressed in leaves, leaf primordia, immature ears, immature tassels, whole ovules, silk and husk leaves.

It is found in the nucleus. In Zea mays (Maize), this protein is Protein IAL1.